A 433-amino-acid polypeptide reads, in one-letter code: 28S rRNA (cytosine-C(5))-methyltransferase (433 aa).

S-adenosyl-L-methionine-binding positions include 235–241 (CAAPGMK), E259, D286, and D304. C357 acts as the Nucleophile in catalysis.

Belongs to the class I-like SAM-binding methyltransferase superfamily. RsmB/NOP family.

It catalyses the reaction a cytidine in 28S rRNA + S-adenosyl-L-methionine = a 5-methylcytidine in 28S rRNA + S-adenosyl-L-homocysteine + H(+). Its function is as follows. S-adenosyl-L-methionine-dependent methyltransferase that specifically methylates the C(5) position of a cytosine in 28S rRNA. The protein is 28S rRNA (cytosine-C(5))-methyltransferase of Drosophila melanogaster (Fruit fly).